A 226-amino-acid polypeptide reads, in one-letter code: ATP synthase F(0) complex subunit a (226 aa).

6 helical membrane passes run 6–26, 68–88, 97–117, 138–158, 164–184, and 195–215; these read FAPF…IITF, WTLM…LGLL, QLSM…IMGF, IPML…ALAV, ITAG…LSSI, and ILFL…YVFT.

Belongs to the ATPase A chain family. In terms of assembly, component of the ATP synthase complex composed at least of ATP5F1A/subunit alpha, ATP5F1B/subunit beta, ATP5MC1/subunit c (homooctomer), MT-ATP6/subunit a, MT-ATP8/subunit 8, ATP5ME/subunit e, ATP5MF/subunit f, ATP5MG/subunit g, ATP5MK/subunit k, ATP5MJ/subunit j, ATP5F1C/subunit gamma, ATP5F1D/subunit delta, ATP5F1E/subunit epsilon, ATP5PF/subunit F6, ATP5PB/subunit b, ATP5PD/subunit d, ATP5PO/subunit OSCP. ATP synthase complex consists of a soluble F(1) head domain (subunits alpha(3) and beta(3)) - the catalytic core - and a membrane F(0) domain - the membrane proton channel (subunits c, a, 8, e, f, g, k and j). These two domains are linked by a central stalk (subunits gamma, delta, and epsilon) rotating inside the F1 region and a stationary peripheral stalk (subunits F6, b, d, and OSCP). Interacts with DNAJC30; interaction is direct.

It localises to the mitochondrion inner membrane. It catalyses the reaction H(+)(in) = H(+)(out). Its function is as follows. Subunit a, of the mitochondrial membrane ATP synthase complex (F(1)F(0) ATP synthase or Complex V) that produces ATP from ADP in the presence of a proton gradient across the membrane which is generated by electron transport complexes of the respiratory chain. ATP synthase complex consist of a soluble F(1) head domain - the catalytic core - and a membrane F(1) domain - the membrane proton channel. These two domains are linked by a central stalk rotating inside the F(1) region and a stationary peripheral stalk. During catalysis, ATP synthesis in the catalytic domain of F(1) is coupled via a rotary mechanism of the central stalk subunits to proton translocation. With the subunit c (ATP5MC1), forms the proton-conducting channel in the F(0) domain, that contains two crucial half-channels (inlet and outlet) that facilitate proton movement from the mitochondrial intermembrane space (IMS) into the matrix. Protons are taken up via the inlet half-channel and released through the outlet half-channel, following a Grotthuss mechanism. The sequence is that of ATP synthase F(0) complex subunit a from Didelphis virginiana (North American opossum).